The sequence spans 151 residues: Melatonin receptor type 1C (151 aa).

Topologically, residues 1–13 (CHSLRYDRLYSRR) are cytoplasmic. A helical membrane pass occupies residues 14-34 (NTCLYLLLTWMLTALATVPNF). Residues 35–58 (LVGSLKYDPRVFSCTFTQTASSSY) lie on the Extracellular side of the membrane. A helical membrane pass occupies residues 59–79 (TVCVVLIHFLVPLGVVSFCYL). At 80 to 109 (RIWTLVIRVKGRVRPNPKVRAADLRNFLTM) the chain is on the cytoplasmic side. Residues 110–130 (FVVFVLFAVCWAPLNFIGLAV) form a helical membrane-spanning segment. The Extracellular segment spans residues 131–143 (AINPAKVAPNIPE). A helical transmembrane segment spans residues 144 to 151 (WLFVTSYF).

This sequence belongs to the G-protein coupled receptor 1 family.

Its subcellular location is the cell membrane. Functionally, high affinity receptor for melatonin. The activity of this receptor is mediated by pertussis toxin sensitive G proteins that inhibits adenylate cyclase activity. This chain is Melatonin receptor type 1C (mtnr1c), found in Danio rerio (Zebrafish).